The chain runs to 314 residues: Nerylneryl diphosphate synthase CPT2, chloroplastic (314 aa).

The N-terminal 61 residues, 1 to 61 (MNSSIVSQHF…MSDRGLSKIS (61 aa)), are a transit peptide targeting the chloroplast. Asp97 is an active-site residue.

Belongs to the UPP synthase family. It depends on Mg(2+) as a cofactor. Expressed in stems. Expressed in petiolules. Expressed at low levels in leaf trichomes, old leaf and roots.

The protein localises to the plastid. It is found in the chloroplast. The enzyme catalyses 3 isopentenyl diphosphate + dimethylallyl diphosphate = nerylneryl diphosphate + 3 diphosphate. It carries out the reaction isopentenyl diphosphate + dimethylallyl diphosphate = neryl diphosphate + diphosphate. It catalyses the reaction neryl diphosphate + isopentenyl diphosphate = (2Z,6Z)-farnesyl diphosphate + diphosphate. The catalysed reaction is (2Z,6Z)-farnesyl diphosphate + isopentenyl diphosphate = nerylneryl diphosphate + diphosphate. In terms of biological role, uses dimethylallyl diphosphate and isopentenyl diphosphate to catalyze the cis-prenyl chain elongation and produce the 20 carbon product nerylneryl diphosphate. In Solanum lycopersicum (Tomato), this protein is Nerylneryl diphosphate synthase CPT2, chloroplastic.